Here is a 591-residue protein sequence, read N- to C-terminus: V-type ATP synthase alpha chain (591 aa).

233–240 is an ATP binding site; the sequence is GPFGAGKT.

This sequence belongs to the ATPase alpha/beta chains family.

The enzyme catalyses ATP + H2O + 4 H(+)(in) = ADP + phosphate + 5 H(+)(out). Functionally, produces ATP from ADP in the presence of a proton gradient across the membrane. The V-type alpha chain is a catalytic subunit. The protein is V-type ATP synthase alpha chain of Streptococcus pyogenes serotype M28 (strain MGAS6180).